Here is a 399-residue protein sequence, read N- to C-terminus: S-adenosylmethionine synthase (399 aa).

Residue His-17 participates in ATP binding. Asp-19 contacts Mg(2+). Glu-45 provides a ligand contact to K(+). L-methionine is bound by residues Glu-58 and Gln-101. Residues 101 to 111 form a flexible loop region; sequence QSPDIAQGVDE. ATP is bound by residues 177-179, 244-245, Asp-253, 259-260, Ala-276, and Lys-280; these read DAK, RF, and RK. Asp-253 serves as a coordination point for L-methionine. Residue Lys-284 participates in L-methionine binding.

The protein belongs to the AdoMet synthase family. As to quaternary structure, homotetramer; dimer of dimers. Mg(2+) serves as cofactor. Requires K(+) as cofactor.

It is found in the cytoplasm. It carries out the reaction L-methionine + ATP + H2O = S-adenosyl-L-methionine + phosphate + diphosphate. It functions in the pathway amino-acid biosynthesis; S-adenosyl-L-methionine biosynthesis; S-adenosyl-L-methionine from L-methionine: step 1/1. Catalyzes the formation of S-adenosylmethionine (AdoMet) from methionine and ATP. The overall synthetic reaction is composed of two sequential steps, AdoMet formation and the subsequent tripolyphosphate hydrolysis which occurs prior to release of AdoMet from the enzyme. This is S-adenosylmethionine synthase from Listeria monocytogenes serotype 4b (strain CLIP80459).